The chain runs to 297 residues: Homoserine kinase (297 aa).

An ATP-binding site is contributed by 82 to 92; sequence PLTRGLGSSAS.

It belongs to the GHMP kinase family. Homoserine kinase subfamily.

It localises to the cytoplasm. The enzyme catalyses L-homoserine + ATP = O-phospho-L-homoserine + ADP + H(+). Its pathway is amino-acid biosynthesis; L-threonine biosynthesis; L-threonine from L-aspartate: step 4/5. Functionally, catalyzes the ATP-dependent phosphorylation of L-homoserine to L-homoserine phosphate. The polypeptide is Homoserine kinase (Bacillus cereus (strain AH187)).